The sequence spans 437 residues: Adenylosuccinate synthetase (437 aa).

Residues 12–18 (GDEGKGK) and 40–42 (GHT) contribute to the GTP site. Asp-13 (proton acceptor) is an active-site residue. Asp-13 and Gly-40 together coordinate Mg(2+). IMP contacts are provided by residues 13–16 (DEGK), 38–41 (NAGH), Thr-128, Arg-142, Gln-223, Thr-238, and Arg-302. His-41 (proton donor) is an active-site residue. 298–304 (TTTGRKR) lines the substrate pocket. GTP-binding positions include Arg-304, 330–332 (KLD), and 412–414 (SLG).

The protein belongs to the adenylosuccinate synthetase family. In terms of assembly, homodimer. Mg(2+) serves as cofactor.

Its subcellular location is the cytoplasm. The enzyme catalyses IMP + L-aspartate + GTP = N(6)-(1,2-dicarboxyethyl)-AMP + GDP + phosphate + 2 H(+). Its pathway is purine metabolism; AMP biosynthesis via de novo pathway; AMP from IMP: step 1/2. Its function is as follows. Plays an important role in the de novo pathway of purine nucleotide biosynthesis. Catalyzes the first committed step in the biosynthesis of AMP from IMP. This is Adenylosuccinate synthetase from Trichodesmium erythraeum (strain IMS101).